The primary structure comprises 180 residues: MADPELQLVARRIRSFPNFPIPGVLFRDISPVLKDPTSFRASINLLANHLKKAHGGRIDYIAGLDSRGFLFGPSLAQELGLGCILIRKRGKLPGPTVCASYALEYGKGELEIQRDALEPGQKVVVVDDLLATGGTMCAACELLGQLRAEVLECVSLVELTSLKGREKLGAVPFFSLLQYE.

Position 2 is an N-acetylalanine (alanine 2). Phosphoserine occurs at positions 15 and 30. Phosphotyrosine is present on tyrosine 60. Serine 66 carries the post-translational modification Phosphoserine. Threonine 135 carries the post-translational modification Phosphothreonine.

Belongs to the purine/pyrimidine phosphoribosyltransferase family. As to quaternary structure, homodimer.

It localises to the cytoplasm. It catalyses the reaction AMP + diphosphate = 5-phospho-alpha-D-ribose 1-diphosphate + adenine. The protein operates within purine metabolism; AMP biosynthesis via salvage pathway; AMP from adenine: step 1/1. In terms of biological role, catalyzes a salvage reaction resulting in the formation of AMP, that is energically less costly than de novo synthesis. The chain is Adenine phosphoribosyltransferase from Bos taurus (Bovine).